A 75-amino-acid polypeptide reads, in one-letter code: Small ribosomal subunit protein bS16 (75 aa).

It belongs to the bacterial ribosomal protein bS16 family.

In Campylobacter lari (strain RM2100 / D67 / ATCC BAA-1060), this protein is Small ribosomal subunit protein bS16.